Reading from the N-terminus, the 404-residue chain is Formate-dependent phosphoribosylglycinamide formyltransferase (404 aa).

Residues 25–26 (EL) and glutamate 85 contribute to the N(1)-(5-phospho-beta-D-ribosyl)glycinamide site. Residues arginine 118, lysine 159, 164-169 (SSGKGQ), 199-202 (EGFI), and glutamate 207 contribute to the ATP site. One can recognise an ATP-grasp domain in the interval 123–318 (RLAAEELGLP…EFELHARAIL (196 aa)). 2 residues coordinate Mg(2+): glutamate 277 and glutamate 289. N(1)-(5-phospho-beta-D-ribosyl)glycinamide is bound by residues aspartate 296, lysine 365, and 372-373 (RR).

This sequence belongs to the PurK/PurT family. Homodimer.

It carries out the reaction N(1)-(5-phospho-beta-D-ribosyl)glycinamide + formate + ATP = N(2)-formyl-N(1)-(5-phospho-beta-D-ribosyl)glycinamide + ADP + phosphate + H(+). Its pathway is purine metabolism; IMP biosynthesis via de novo pathway; N(2)-formyl-N(1)-(5-phospho-D-ribosyl)glycinamide from N(1)-(5-phospho-D-ribosyl)glycinamide (formate route): step 1/1. In terms of biological role, involved in the de novo purine biosynthesis. Catalyzes the transfer of formate to 5-phospho-ribosyl-glycinamide (GAR), producing 5-phospho-ribosyl-N-formylglycinamide (FGAR). Formate is provided by PurU via hydrolysis of 10-formyl-tetrahydrofolate. The sequence is that of Formate-dependent phosphoribosylglycinamide formyltransferase from Burkholderia lata (strain ATCC 17760 / DSM 23089 / LMG 22485 / NCIMB 9086 / R18194 / 383).